The following is a 288-amino-acid chain: Acetyl-coenzyme A carboxylase carboxyl transferase subunit beta (288 aa).

Residues 34-288 enclose the CoA carboxyltransferase N-terminal domain; it reads LFAKCPACKH…HLVAFHGGGQ (255 aa). Residues cysteine 38, cysteine 41, cysteine 56, and cysteine 59 each coordinate Zn(2+). The segment at 38–59 adopts a C4-type zinc-finger fold; that stretch reads CPACKHMIYKKDLGLAKICPTC.

This sequence belongs to the AccD/PCCB family. Acetyl-CoA carboxylase is a heterohexamer composed of biotin carboxyl carrier protein (AccB), biotin carboxylase (AccC) and two subunits each of ACCase subunit alpha (AccA) and ACCase subunit beta (AccD). It depends on Zn(2+) as a cofactor.

Its subcellular location is the cytoplasm. It catalyses the reaction N(6)-carboxybiotinyl-L-lysyl-[protein] + acetyl-CoA = N(6)-biotinyl-L-lysyl-[protein] + malonyl-CoA. It functions in the pathway lipid metabolism; malonyl-CoA biosynthesis; malonyl-CoA from acetyl-CoA: step 1/1. Functionally, component of the acetyl coenzyme A carboxylase (ACC) complex. Biotin carboxylase (BC) catalyzes the carboxylation of biotin on its carrier protein (BCCP) and then the CO(2) group is transferred by the transcarboxylase to acetyl-CoA to form malonyl-CoA. The chain is Acetyl-coenzyme A carboxylase carboxyl transferase subunit beta from Streptococcus pyogenes serotype M28 (strain MGAS6180).